The sequence spans 72 residues: NAD(P)H-quinone oxidoreductase subunit O (72 aa).

Belongs to the complex I NdhO subunit family. As to quaternary structure, NDH-1 can be composed of about 15 different subunits; different subcomplexes with different compositions have been identified which probably have different functions.

Its subcellular location is the cellular thylakoid membrane. It catalyses the reaction a plastoquinone + NADH + (n+1) H(+)(in) = a plastoquinol + NAD(+) + n H(+)(out). It carries out the reaction a plastoquinone + NADPH + (n+1) H(+)(in) = a plastoquinol + NADP(+) + n H(+)(out). Its function is as follows. NDH-1 shuttles electrons from an unknown electron donor, via FMN and iron-sulfur (Fe-S) centers, to quinones in the respiratory and/or the photosynthetic chain. The immediate electron acceptor for the enzyme in this species is believed to be plastoquinone. Couples the redox reaction to proton translocation, and thus conserves the redox energy in a proton gradient. Cyanobacterial NDH-1 also plays a role in inorganic carbon-concentration. The chain is NAD(P)H-quinone oxidoreductase subunit O from Synechococcus sp. (strain JA-3-3Ab) (Cyanobacteria bacterium Yellowstone A-Prime).